Reading from the N-terminus, the 147-residue chain is Putative HTH-type transcriptional regulator slr0846 (147 aa).

The HTH rrf2-type domain maps to 2–130; the sequence is KLTTKSHYSV…YSITLADLYY (129 aa).

The sequence is that of Putative HTH-type transcriptional regulator slr0846 from Synechocystis sp. (strain ATCC 27184 / PCC 6803 / Kazusa).